A 409-amino-acid chain; its full sequence is NADH-ubiquinone oxidoreductase chain 4 (409 aa).

Helical transmembrane passes span 10 to 30 (LWLF…FLIF), 44 to 64 (SYSF…IVIS), 76 to 96 (ILVF…LYMF), 98 to 118 (ELSM…IEKI), 120 to 140 (SSYY…FVYF), 160 to 180 (FFIL…HLWL), 194 to 214 (LLAG…LGSL), 221 to 241 (VWIL…VFQS), 245 to 265 (ALAA…LVFI), 271 to 291 (ISSV…FYLI), 305 to 325 (FMSS…VVFL), 353 to 373 (MFVM…FLIT), and 389 to 409 (VGFS…SVFY).

This sequence belongs to the complex I subunit 4 family.

It localises to the mitochondrion membrane. The enzyme catalyses a ubiquinone + NADH + 5 H(+)(in) = a ubiquinol + NAD(+) + 4 H(+)(out). Its function is as follows. Core subunit of the mitochondrial membrane respiratory chain NADH dehydrogenase (Complex I) that is believed to belong to the minimal assembly required for catalysis. Complex I functions in the transfer of electrons from NADH to the respiratory chain. The immediate electron acceptor for the enzyme is believed to be ubiquinone. This chain is NADH-ubiquinone oxidoreductase chain 4, found in Caenorhabditis elegans.